Reading from the N-terminus, the 59-residue chain is Large ribosomal subunit protein uL30 (59 aa).

Belongs to the universal ribosomal protein uL30 family. In terms of assembly, part of the 50S ribosomal subunit.

In Staphylococcus epidermidis (strain ATCC 12228 / FDA PCI 1200), this protein is Large ribosomal subunit protein uL30.